We begin with the raw amino-acid sequence, 405 residues long: Tryptophan synthase beta chain (405 aa).

Lysine 86 carries the post-translational modification N6-(pyridoxal phosphate)lysine.

This sequence belongs to the TrpB family. In terms of assembly, tetramer of two alpha and two beta chains. The cofactor is pyridoxal 5'-phosphate.

The enzyme catalyses (1S,2R)-1-C-(indol-3-yl)glycerol 3-phosphate + L-serine = D-glyceraldehyde 3-phosphate + L-tryptophan + H2O. Its pathway is amino-acid biosynthesis; L-tryptophan biosynthesis; L-tryptophan from chorismate: step 5/5. Its function is as follows. The beta subunit is responsible for the synthesis of L-tryptophan from indole and L-serine. The chain is Tryptophan synthase beta chain from Shewanella piezotolerans (strain WP3 / JCM 13877).